Reading from the N-terminus, the 261-residue chain is Glutamate racemase (261 aa).

Residues 7–8 (DS) and 39–40 (YG) each bind substrate. The active-site Proton donor/acceptor is the Cys71. A substrate-binding site is contributed by 72–73 (NT). Cys184 functions as the Proton donor/acceptor in the catalytic mechanism. 185-186 (TH) is a binding site for substrate.

This sequence belongs to the aspartate/glutamate racemases family.

The catalysed reaction is L-glutamate = D-glutamate. The protein operates within cell wall biogenesis; peptidoglycan biosynthesis. Its function is as follows. Provides the (R)-glutamate required for cell wall biosynthesis. This Aliarcobacter butzleri (strain RM4018) (Arcobacter butzleri) protein is Glutamate racemase.